Here is a 72-residue protein sequence, read N- to C-terminus: DNA-directed RNA polymerase subunit omega (72 aa).

It belongs to the RNA polymerase subunit omega family. In terms of assembly, the RNAP catalytic core consists of 2 alpha, 1 beta, 1 beta' and 1 omega subunit. When a sigma factor is associated with the core the holoenzyme is formed, which can initiate transcription.

It carries out the reaction RNA(n) + a ribonucleoside 5'-triphosphate = RNA(n+1) + diphosphate. In terms of biological role, promotes RNA polymerase assembly. Latches the N- and C-terminal regions of the beta' subunit thereby facilitating its interaction with the beta and alpha subunits. This Francisella tularensis subsp. tularensis (strain FSC 198) protein is DNA-directed RNA polymerase subunit omega.